A 348-amino-acid chain; its full sequence is VIP36-like protein (348 aa).

Positions 1 to 38 (MAVALGPSGWWQRWRRRLSAREVSRMLLLLLLLGSGQG) are cleaved as a signal peptide. Residues 39–313 (PRQVGAGQTF…APLPPLSGLA (275 aa)) lie on the Lumenal side of the membrane. One can recognise an L-type lectin-like domain in the interval 49-274 (EYLKREHSLS…DVISLKLFEL (226 aa)). 2 residues coordinate a carbohydrate: S93 and D128. D159, Y161, and N163 together coordinate Ca(2+). 2 residues coordinate a carbohydrate: Y161 and N163. N-linked (GlcNAc...) asparagine glycosylation occurs at N181. Residue H188 participates in a carbohydrate binding. Ca(2+) is bound at residue D191. A disulfide bridge connects residues C200 and C237. Residue 258-260 (GDL) coordinates a carbohydrate. Residues 314 to 334 (LFLIVFFSLVFSVFAIVIGII) form a helical membrane-spanning segment. The Cytoplasmic portion of the chain corresponds to 335-348 (LYNKWQDQSRKRFY). An Endoplasmic reticulum retention signal motif is present at residues 344-346 (RKR).

The protein localises to the endoplasmic reticulum membrane. It is found in the golgi apparatus membrane. Its function is as follows. May be involved in the regulation of export from the endoplasmic reticulum of a subset of glycoproteins. May function as a regulator of ERGIC-53. In Bos taurus (Bovine), this protein is VIP36-like protein (LMAN2L).